The chain runs to 88 residues: FXYD domain-containing ion transport regulator 3 (88 aa).

Positions 1-20 (MQEFALSLLVLLAGLPTLDA) are cleaved as a signal peptide. Residues 21 to 38 (NDPEDKDSPFYYDWHSLR) are Extracellular-facing. Residues 39-59 (VGGLICAGILCALGIIVLMSG) traverse the membrane as a helical segment. The Cytoplasmic portion of the chain corresponds to 60–88 (KCKCKFSQKPSHRPGDGPPLITPGSAHNC). Residues 66–88 (SQKPSHRPGDGPPLITPGSAHNC) are disordered.

The protein belongs to the FXYD family. As to quaternary structure, regulatory subunit of the sodium/potassium-transporting ATPase which is composed of a catalytic alpha subunit, a non-catalytic beta subunit and an additional regulatory subunit. Interacts with catalytic alpha subunit ATP1A1. Also interacts with non-catalytic beta subunit ATP1B1. Interacts with the alpha1-beta1, alpha2-beta1 and alpha3-beta1 NKA isozymes. In terms of processing, glutathionylated.

Its subcellular location is the cell membrane. Its function is as follows. Associates with and regulates the activity of the sodium/potassium-transporting ATPase (NKA) which transports Na(+) out of the cell and K(+) into the cell. Reduces glutathionylation of the NKA beta-1 subunit ATP1B1, thus reversing glutathionylation-mediated inhibition of ATP1B1. Induces a hyperpolarization-activated chloride current when expressed in Xenopus oocytes. The chain is FXYD domain-containing ion transport regulator 3 (Fxyd3) from Rattus norvegicus (Rat).